An 89-amino-acid polypeptide reads, in one-letter code: Ribonuclease P protein component 1 (89 aa).

The protein belongs to the eukaryotic/archaeal RNase P protein component 1 family. As to quaternary structure, consists of a catalytic RNA component and at least 4-5 protein subunits.

The protein resides in the cytoplasm. It carries out the reaction Endonucleolytic cleavage of RNA, removing 5'-extranucleotides from tRNA precursor.. Functionally, part of ribonuclease P, a protein complex that generates mature tRNA molecules by cleaving their 5'-ends. The sequence is that of Ribonuclease P protein component 1 from Thermoplasma volcanium (strain ATCC 51530 / DSM 4299 / JCM 9571 / NBRC 15438 / GSS1).